Here is a 177-residue protein sequence, read N- to C-terminus: Large ribosomal subunit protein uL6 (177 aa).

It belongs to the universal ribosomal protein uL6 family. In terms of assembly, part of the 50S ribosomal subunit.

This protein binds to the 23S rRNA, and is important in its secondary structure. It is located near the subunit interface in the base of the L7/L12 stalk, and near the tRNA binding site of the peptidyltransferase center. In Paracoccus denitrificans (strain Pd 1222), this protein is Large ribosomal subunit protein uL6.